We begin with the raw amino-acid sequence, 203 residues long: Ribosomal RNA large subunit methyltransferase E (203 aa).

5 residues coordinate S-adenosyl-L-methionine: glycine 59, tryptophan 61, aspartate 79, aspartate 97, and aspartate 119. Lysine 159 acts as the Proton acceptor in catalysis.

This sequence belongs to the class I-like SAM-binding methyltransferase superfamily. RNA methyltransferase RlmE family.

Its subcellular location is the cytoplasm. It carries out the reaction uridine(2552) in 23S rRNA + S-adenosyl-L-methionine = 2'-O-methyluridine(2552) in 23S rRNA + S-adenosyl-L-homocysteine + H(+). Specifically methylates the uridine in position 2552 of 23S rRNA at the 2'-O position of the ribose in the fully assembled 50S ribosomal subunit. This Desulforapulum autotrophicum (strain ATCC 43914 / DSM 3382 / VKM B-1955 / HRM2) (Desulfobacterium autotrophicum) protein is Ribosomal RNA large subunit methyltransferase E.